A 463-amino-acid polypeptide reads, in one-letter code: DNA polymerase subunit gamma-2, mitochondrial (463 aa).

The transit peptide at 1–44 (MLLTLKNTGQLLVAACSKVARSLAKYHPRVNHHRHCVWCSKRGL) directs the protein to the mitochondrion.

In terms of assembly, heterotrimer composed of a catalytic subunit and a homodimer of accessory subunits.

Its subcellular location is the mitochondrion. Its function is as follows. Mitochondrial polymerase processivity subunit. It regulates the polymerase and exonuclease activities promoting processive DNA synthesis. Binds to ss-DNA. This chain is DNA polymerase subunit gamma-2, mitochondrial (polg2), found in Xenopus laevis (African clawed frog).